Consider the following 476-residue polypeptide: RNA-binding protein 45 (476 aa).

Residues 1–14 (MDDAGGLGGSGGFR) are compositionally biased toward gly residues. Residues 1-20 (MDDAGGLGGSGGFRPGVDSL) are disordered. RRM domains are found at residues 26-106 (SRIF…IAQS) and 121-192 (TRIF…LAEP). Residue Lys-34 forms a Glycyl lysine isopeptide (Lys-Gly) (interchain with G-Cter in SUMO2) linkage. The interval 192 to 212 (PKNKVSGSPEQDDYSSGRQEA) is disordered. Positions 196–209 (VSGSPEQDDYSSGR) are enriched in polar residues. 2 positions are modified to phosphoserine: Ser-199 and Ser-464. The region spanning 392-464 (ERLFVVFNPH…VRLKVMLADS (73 aa)) is the RRM 3 domain.

Its subcellular location is the cytoplasm. It is found in the nucleus. In terms of biological role, RNA-binding protein with binding specificity for poly(C). May play an important role in neural development. This is RNA-binding protein 45 (Rbm45) from Mus musculus (Mouse).